The sequence spans 293 residues: 4-hydroxy-tetrahydrodipicolinate synthase (293 aa).

Thr46 provides a ligand contact to pyruvate. Tyr133 functions as the Proton donor/acceptor in the catalytic mechanism. Catalysis depends on Lys161, which acts as the Schiff-base intermediate with substrate. Residue Val202 participates in pyruvate binding.

The protein belongs to the DapA family. As to quaternary structure, homotetramer; dimer of dimers.

The protein resides in the cytoplasm. The enzyme catalyses L-aspartate 4-semialdehyde + pyruvate = (2S,4S)-4-hydroxy-2,3,4,5-tetrahydrodipicolinate + H2O + H(+). It participates in amino-acid biosynthesis; L-lysine biosynthesis via DAP pathway; (S)-tetrahydrodipicolinate from L-aspartate: step 3/4. In terms of biological role, catalyzes the condensation of (S)-aspartate-beta-semialdehyde [(S)-ASA] and pyruvate to 4-hydroxy-tetrahydrodipicolinate (HTPA). This Wolbachia pipientis subsp. Culex pipiens (strain wPip) protein is 4-hydroxy-tetrahydrodipicolinate synthase.